Reading from the N-terminus, the 358-residue chain is Glutamine synthetase (358 aa).

A GS beta-grasp domain is found at 26–105 (ILAEYIWIDG…VLAECWNADG (80 aa)). Residues 112–358 (HRHECAKIME…IMMETICGGI (247 aa)) form the GS catalytic domain.

The protein belongs to the glutamine synthetase family. Homooctamer.

The protein localises to the cytoplasm. It catalyses the reaction L-glutamate + NH4(+) + ATP = L-glutamine + ADP + phosphate + H(+). The sequence is that of Glutamine synthetase (GLN1) from Tuber borchii (White truffle).